The sequence spans 644 residues: Tubulin--tyrosine ligase-like protein 12 (644 aa).

Positions 1–13 are enriched in basic and acidic residues; sequence MEAERGPERRPAE. Residues 1–25 form a disordered region; it reads MEAERGPERRPAERSSPGQTPEEGA. In terms of domain architecture, TTL spans 300–644; sequence PHGHIFKVYT…PGGCHVTCLV (345 aa). ATP-binding positions include 450 to 453, Lys468, and Asp470; that span reads SKYI.

It belongs to the tubulin--tyrosine ligase family. In terms of assembly, interacts with MAVS; the interaction prevents MAVS binding to TBK1 and IKBKE. Interacts (via N-terminus) with TBK1 (via protein kinase domain). Interacts (via TTL domain) with IKBKE (via protein kinase domain). Interacts with tubulin alpha. Interacts with histone H3 and histone H4 (when trimethylated at 'Lys-20' (H4K20me3)). Interacts with CBX3. As to expression, expressed in the basal layer of prostate and endothelial cells. Increased expression in prostatic intraepithelial neoplasia and metastatic lesions.

It localises to the cytoplasm. The protein localises to the midbody. The protein resides in the cytoskeleton. Its subcellular location is the microtubule organizing center. It is found in the centrosome. It localises to the spindle. The protein localises to the nucleus. Its function is as follows. Negatively regulates post-translational modifications of tubulin, including detyrosination of the C-terminus and polyglutamylation of glutamate residues. Also, indirectly promotes histone H4 trimethylation at 'Lys-20' (H4K20me3). Probably by controlling tubulin and/or histone H4 post-translational modifications, plays a role in mitosis and in maintaining chromosome number stability. During RNA virus-mediated infection, acts as a negative regulator of the RIG-I pathway by preventing MAVS binding to TBK1 and IKBKE. The sequence is that of Tubulin--tyrosine ligase-like protein 12 (TTLL12) from Homo sapiens (Human).